We begin with the raw amino-acid sequence, 434 residues long: Probable carboxypeptidase BDCG_03757 (434 aa).

An N-terminal signal peptide occupies residues 1 to 20 (MKLSHLAAALSAQLVAPVAA). 2 N-linked (GlcNAc...) asparagine glycosylation sites follow: Asn136 and Asn150. Asp160 provides a ligand contact to Zn(2+). Glu192 serves as the catalytic Proton acceptor. Position 193 (Glu193) interacts with Zn(2+). A glycan (N-linked (GlcNAc...) asparagine) is linked at Asn343.

It belongs to the peptidase M20A family. The cofactor is Zn(2+).

Its subcellular location is the secreted. The chain is Probable carboxypeptidase BDCG_03757 from Ajellomyces dermatitidis (strain ER-3 / ATCC MYA-2586) (Blastomyces dermatitidis).